We begin with the raw amino-acid sequence, 216 residues long: uncharacterized protein (216 aa).

Helical transmembrane passes span 12-32 (YVLGVVFVILLPGPNSLFVLA), 48-68 (GVFLGDAVLMLLSALGVASLL), 74-94 (LFIGLKYLGAAYLFYLGVGML), 134-154 (ILFFISFFIQFVDPGYAYPGL), 156-176 (FLVLAVILELVSALYLSFLIF), and 191-211 (LAAGATSGVGALFVGFGVKLA).

This sequence belongs to the Rht family.

The protein resides in the cell membrane. This is an uncharacterized protein from Pseudomonas aeruginosa (strain ATCC 15692 / DSM 22644 / CIP 104116 / JCM 14847 / LMG 12228 / 1C / PRS 101 / PAO1).